The following is a 313-amino-acid chain: Nodulation protein D 3 (313 aa).

The region spanning 6 to 63 (LDLNLLVALDALMTKRSVTAAARSINLSQPAMSSAIARLRSYFQDELFRMQGRELITT) is the HTH lysR-type domain. Residues 23–42 (VTAAARSINLSQPAMSSAIA) constitute a DNA-binding region (H-T-H motif).

This sequence belongs to the LysR transcriptional regulatory family.

Functionally, nodD regulates the expression of the nodABCFE genes which encode other nodulation proteins. NodD is also a negative regulator of its own expression. Binds flavonoids as inducers. The chain is Nodulation protein D 3 (nodD3) from Rhizobium meliloti (strain 1021) (Ensifer meliloti).